A 452-amino-acid chain; its full sequence is Transcription factor ETV6 (452 aa).

A compositionally biased stretch (polar residues) spans 1–10 (MSETPAQCSI). Positions 1–30 (MSETPAQCSIKQERISYTPPESPVPSYASS) are disordered. Lysine 11 bears the N6-acetyllysine; alternate mark. Lysine 11 is covalently cross-linked (Glycyl lysine isopeptide (Lys-Gly) (interchain with G-Cter in SUMO2); alternate). Threonine 18 carries the phosphothreonine modification. Serine 22 is modified (phosphoserine). The 85-residue stretch at 40-124 (ALRMEEDSIR…ELLQHILKQR (85 aa)) folds into the PNT domain. Residues 158-262 (VQRTPRPSVD…PKPSSPRQES (105 aa)) form a disordered region. 2 positions are modified to phosphoserine: serine 213 and serine 238. Positions 230 to 250 (QESYPLSVSPMENNHCPASSE) are enriched in polar residues. The residue at position 257 (serine 257) is a Phosphoserine; by MAPK14. Residue lysine 288 forms a Glycyl lysine isopeptide (Lys-Gly) (interchain with G-Cter in SUMO2) linkage. Lysine 302 is subject to N6-acetyllysine; alternate. Residue lysine 302 forms a Glycyl lysine isopeptide (Lys-Gly) (interchain with G-Cter in SUMO2); alternate linkage. Serine 323 bears the Phosphoserine mark. A DNA-binding region (ETS) is located at residues 339–420 (RLLWDYVYQL…PGQRLLFRFM (82 aa)). Glycyl lysine isopeptide (Lys-Gly) (interchain with G-Cter in SUMO2) cross-links involve residues lysine 403 and lysine 421.

This sequence belongs to the ETS family. Can form homodimers or heterodimers with TEL2 or FLI1. Interacts with L3MBTL1 and HDAC9. Post-translationally, phosphorylation of Ser-257 by MAPK14 (p38) inhibits ETV6 transcriptional repression. As to expression, ubiquitous.

Its subcellular location is the nucleus. Its function is as follows. Transcriptional repressor; binds to the DNA sequence 5'-CCGGAAGT-3'. Plays a role in hematopoiesis and malignant transformation. The sequence is that of Transcription factor ETV6 (ETV6) from Homo sapiens (Human).